Reading from the N-terminus, the 352-residue chain is Hematopoietic SH2 domain-containing protein (352 aa).

The SH2 domain occupies 34–125 (WFHGAISRED…PRRELLTQPC (92 aa)). Disordered regions lie at residues 157 to 199 (EEAS…LGET) and 241 to 352 (VISG…PGYC). The segment covering 180–191 (RITTKEATSSCP) has biased composition (polar residues). Residues 283–295 (PKDRKVPTRKAER) show a composition bias toward basic and acidic residues. The segment covering 343-352 (QPPPFAPGYC) has biased composition (pro residues).

In terms of assembly, interacts with FES and TNK2. Post-translationally, may be phosphorylated by FES and ACK1. Predominantly expressed in spleen and hematopoietic cells such as peripheral blood leukocytes and weakly expressed in prostate, thymus, heart, small intestine and placenta.

It is found in the cytoplasm. The protein localises to the nucleus. In terms of biological role, may be a modulator of the apoptotic response through its ability to affect mitochondrial stability. Adapter protein involved in tyrosine kinase and CD28 signaling. Seems to affect CD28-mediated activation of the RE/AP element of the interleukin-2 promoter. This chain is Hematopoietic SH2 domain-containing protein (HSH2D), found in Homo sapiens (Human).